We begin with the raw amino-acid sequence, 138 residues long: Glutaredoxin-like protein C5orf63 (138 aa).

Cysteine 41 and cysteine 44 form a disulfide bridge. Positions 55 to 64 (ENRQPYKDQK) are enriched in basic and acidic residues. The segment at 55-88 (ENRQPYKDQKLPGTRRRRSPSSPSHPHMASQSGK) is disordered.

It belongs to the glutaredoxin family. YDR286C subfamily.

This Homo sapiens (Human) protein is Glutaredoxin-like protein C5orf63 (C5orf63).